A 702-amino-acid chain; its full sequence is Polyribonucleotide nucleotidyltransferase (702 aa).

Residues D485 and D491 each coordinate Mg(2+). Positions P552–I612 constitute a KH domain. The 69-residue stretch at G622–K690 folds into the S1 motif domain.

The protein belongs to the polyribonucleotide nucleotidyltransferase family. The cofactor is Mg(2+).

It is found in the cytoplasm. It carries out the reaction RNA(n+1) + phosphate = RNA(n) + a ribonucleoside 5'-diphosphate. Involved in mRNA degradation. Catalyzes the phosphorolysis of single-stranded polyribonucleotides processively in the 3'- to 5'-direction. In Clostridium botulinum (strain Langeland / NCTC 10281 / Type F), this protein is Polyribonucleotide nucleotidyltransferase.